A 162-amino-acid polypeptide reads, in one-letter code: MRLTSKGRYAVTAMLDVALNSEAGPVPLADISERQGISLSYLEQLFSRLRKNGLVSSVRGPGGGYLLGKDASSIAVGEVISAVDESVDATRCQGKGGCQGGDKCLTHALWRDLSDRLTGFLNNITLGELVNNQEVLDVSGRQHTHDAPRTRIQDAIDVKLRA.

In terms of domain architecture, HTH rrf2-type spans 2 to 131 (RLTSKGRYAV…NNITLGELVN (130 aa)). A DNA-binding region (H-T-H motif) is located at residues 28–51 (LADISERQGISLSYLEQLFSRLRK). Positions 92, 98, and 104 each coordinate [2Fe-2S] cluster.

The cofactor is [2Fe-2S] cluster.

Its function is as follows. Regulates the transcription of several operons and genes involved in the biogenesis of Fe-S clusters and Fe-S-containing proteins. The polypeptide is HTH-type transcriptional regulator IscR (Shigella sonnei (strain Ss046)).